The primary structure comprises 200 residues: Small ribosomal subunit protein uS4 (200 aa).

Residues 22 to 43 (TGKELERRPYAPGQHGPTQRKK) form a disordered region. Positions 92-170 (QRLDNIVYRL…VPEYVTFDAE (79 aa)) constitute an S4 RNA-binding domain.

The protein belongs to the universal ribosomal protein uS4 family. In terms of assembly, part of the 30S ribosomal subunit. Contacts protein S5. The interaction surface between S4 and S5 is involved in control of translational fidelity.

One of the primary rRNA binding proteins, it binds directly to 16S rRNA where it nucleates assembly of the body of the 30S subunit. In terms of biological role, with S5 and S12 plays an important role in translational accuracy. In Listeria welshimeri serovar 6b (strain ATCC 35897 / DSM 20650 / CCUG 15529 / CIP 8149 / NCTC 11857 / SLCC 5334 / V8), this protein is Small ribosomal subunit protein uS4.